We begin with the raw amino-acid sequence, 379 residues long: Queuine tRNA-ribosyltransferase (379 aa).

Asp-94 functions as the Proton acceptor in the catalytic mechanism. Substrate contacts are provided by residues Asp-94 to Phe-98, Asp-148, Gln-191, and Gly-218. Residues Gly-249–Ser-255 are RNA binding. The active-site Nucleophile is the Asp-268. The segment at Thr-273–Arg-277 is RNA binding; important for wobble base 34 recognition. Zn(2+)-binding residues include Cys-306, Cys-308, Cys-311, and His-337.

This sequence belongs to the queuine tRNA-ribosyltransferase family. Homodimer. Within each dimer, one monomer is responsible for RNA recognition and catalysis, while the other monomer binds to the replacement base PreQ1. Zn(2+) is required as a cofactor.

The enzyme catalyses 7-aminomethyl-7-carbaguanine + guanosine(34) in tRNA = 7-aminomethyl-7-carbaguanosine(34) in tRNA + guanine. It functions in the pathway tRNA modification; tRNA-queuosine biosynthesis. Functionally, catalyzes the base-exchange of a guanine (G) residue with the queuine precursor 7-aminomethyl-7-deazaguanine (PreQ1) at position 34 (anticodon wobble position) in tRNAs with GU(N) anticodons (tRNA-Asp, -Asn, -His and -Tyr). Catalysis occurs through a double-displacement mechanism. The nucleophile active site attacks the C1' of nucleotide 34 to detach the guanine base from the RNA, forming a covalent enzyme-RNA intermediate. The proton acceptor active site deprotonates the incoming PreQ1, allowing a nucleophilic attack on the C1' of the ribose to form the product. After dissociation, two additional enzymatic reactions on the tRNA convert PreQ1 to queuine (Q), resulting in the hypermodified nucleoside queuosine (7-(((4,5-cis-dihydroxy-2-cyclopenten-1-yl)amino)methyl)-7-deazaguanosine). In Bacillus cereus (strain G9842), this protein is Queuine tRNA-ribosyltransferase.